Reading from the N-terminus, the 322-residue chain is Tyrosine recombinase XerC (322 aa).

In terms of domain architecture, Core-binding (CB) spans 14–104 (PDLREAAAAW…ALRSFARHLD (91 aa)). A Tyr recombinase domain is found at 125–311 (RLPRPLPVAA…DSARLLSAFD (187 aa)). Catalysis depends on residues Arg-170, Lys-195, His-263, Arg-266, and His-289. Residue Tyr-298 is the O-(3'-phospho-DNA)-tyrosine intermediate of the active site.

It belongs to the 'phage' integrase family. XerC subfamily. In terms of assembly, forms a cyclic heterotetrameric complex composed of two molecules of XerC and two molecules of XerD.

The protein localises to the cytoplasm. In terms of biological role, site-specific tyrosine recombinase, which acts by catalyzing the cutting and rejoining of the recombining DNA molecules. The XerC-XerD complex is essential to convert dimers of the bacterial chromosome into monomers to permit their segregation at cell division. It also contributes to the segregational stability of plasmids. The sequence is that of Tyrosine recombinase XerC from Methylobacterium nodulans (strain LMG 21967 / CNCM I-2342 / ORS 2060).